Reading from the N-terminus, the 149-residue chain is Ribonuclease HI (149 aa).

The region spanning 1 to 140 (MIIGYFDGLC…AYELVRRGKL (140 aa)) is the RNase H type-1 domain. 4 residues coordinate Mg(2+): Asp-7, Glu-52, Asp-76, and Asp-125. Residues Asp-7, Glu-52, Asp-76, and Asp-125 each coordinate Mn(2+). Cysteines 58 and 145 form a disulfide.

In terms of assembly, monomer. The cofactor is Mn(2+). Requires Mg(2+) as cofactor. It depends on Co(2+) as a cofactor. Ni(2+) serves as cofactor. The disulfide bond confers considerable stability to the protein.

The protein localises to the cytoplasm. The catalysed reaction is Endonucleolytic cleavage to 5'-phosphomonoester.. Its function is as follows. Nuclease that specifically degrades the RNA of RNA-DNA hybrids. Endonucleolytically removes RNA primers from the Okazaki fragments of lagging strand synthesis on its own. In the presence of Mn(2+) or Co(2+) can also cleave an RNA-RNA hybrid; the dsRNase activity is 10- 100-fold lower than RNase H activity. Complements the temperature-sensitive phenotype of an E.coli double rnhA/rnhB (RNase H) disruption mutant. In Sulfurisphaera tokodaii (strain DSM 16993 / JCM 10545 / NBRC 100140 / 7) (Sulfolobus tokodaii), this protein is Ribonuclease HI (rnhA).